A 271-amino-acid chain; its full sequence is GPN-loop GTPase 3 (271 aa).

13–18 (GAGKST) provides a ligand contact to GTP. Positions 70-72 (GPN) match the Gly-Pro-Asn (GPN)-loop; involved in dimer interface motif. Residue 173-176 (SKLD) coordinates GTP.

It belongs to the GPN-loop GTPase family. In terms of assembly, heterodimers with GPN1 or GPN2. Binds to RNA polymerase II (RNAPII).

Its function is as follows. Small GTPase required for proper nuclear import of RNA polymerase II and III (RNAPII and RNAPIII). May act at an RNAP assembly step prior to nuclear import. This Kluyveromyces lactis (strain ATCC 8585 / CBS 2359 / DSM 70799 / NBRC 1267 / NRRL Y-1140 / WM37) (Yeast) protein is GPN-loop GTPase 3.